Here is a 130-residue protein sequence, read N- to C-terminus: Small ribosomal subunit protein uS11 (130 aa).

Belongs to the universal ribosomal protein uS11 family. Part of the 30S ribosomal subunit. Interacts with proteins S7 and S18. Binds to IF-3.

In terms of biological role, located on the platform of the 30S subunit, it bridges several disparate RNA helices of the 16S rRNA. Forms part of the Shine-Dalgarno cleft in the 70S ribosome. This is Small ribosomal subunit protein uS11 from Psychrobacter sp. (strain PRwf-1).